A 407-amino-acid chain; its full sequence is tRNA(Ile)-lysidine synthase (407 aa).

36-41 (SGGRDS) is a binding site for ATP.

Belongs to the tRNA(Ile)-lysidine synthase family.

It localises to the cytoplasm. The catalysed reaction is cytidine(34) in tRNA(Ile2) + L-lysine + ATP = lysidine(34) in tRNA(Ile2) + AMP + diphosphate + H(+). Functionally, ligates lysine onto the cytidine present at position 34 of the AUA codon-specific tRNA(Ile) that contains the anticodon CAU, in an ATP-dependent manner. Cytidine is converted to lysidine, thus changing the amino acid specificity of the tRNA from methionine to isoleucine. The protein is tRNA(Ile)-lysidine synthase of Tropheryma whipplei (strain TW08/27) (Whipple's bacillus).